Consider the following 571-residue polypeptide: PR domain zinc finger protein 14 (571 aa).

Phosphoserine is present on serine 79. The tract at residues 129–191 (LGHQIIGGDN…PKPSNQEGKS (63 aa)) is disordered. The span at 165–176 (RTSQLLPCSPSK) shows a compositional bias: polar residues. The interval 194–384 (RFQFTEEDLH…DIPVSLQVTE (191 aa)) is interaction with CBFA2T2. Residues 251-367 (EGLCLMQTVF…QNQELLVWYG (117 aa)) enclose the SET domain. The C2H2-type 1; atypical zinc finger occupies 400 to 424 (YRCERCGKVFTYKYYRDKHLKYTPC). C2H2-type zinc fingers lie at residues 432-455 (FPCSLCKRSFEKRDRLRIHILHVH), 461-483 (HKCSTCGKCFSQSSSLNKHMRVH), 489-511 (YQCVYCTKRFTASSILRTHIRQH), 517-540 (FKCKYCGKSFASHAAHDSHVRRSH), and 546-568 (CSCSICGKIFSDQETFYSHMKFH).

This sequence belongs to the class V-like SAM-binding methyltransferase superfamily. As to quaternary structure, interacts with CBFA2T2. As to expression, expressed in embryonic stem cells. Tends to be overexpressed in breast cancer (at protein level).

Its subcellular location is the nucleus. Its function is as follows. Transcription factor that has both positive and negative roles on transcription. Required for the maintenance of embryonic stem cell identity and the reacquisition of pluripotency in somatic cells. May play an essential role in germ cell development at 2 levels: the reacquisition of potential pluripotency, including SOX2 up-regulation, and successful epigenetic reprogramming, characterized by EHMT1 repression. Its association with CBFA2T2 is required for the functions in pluripotency and germ cell formation. Directly up-regulates the expression of pluripotency gene POU5F1 through its proximal enhancer. Binds to the DNA consensus sequence 5'-GGTC[TC]CTAA-3'. The sequence is that of PR domain zinc finger protein 14 (PRDM14) from Homo sapiens (Human).